We begin with the raw amino-acid sequence, 257 residues long: uncharacterized protein (257 aa).

Residues 7–27 traverse the membrane as a helical segment; it reads LFLCVSFLLITIFIGGGGFMN.

The protein belongs to the staphylococcal tandem lipoprotein family.

The protein resides in the cell membrane. This is an uncharacterized protein from Staphylococcus epidermidis (strain ATCC 12228 / FDA PCI 1200).